Here is a 63-residue protein sequence, read N- to C-terminus: Large ribosomal subunit protein uL29 (63 aa).

This sequence belongs to the universal ribosomal protein uL29 family.

This Stutzerimonas stutzeri (strain A1501) (Pseudomonas stutzeri) protein is Large ribosomal subunit protein uL29.